The sequence spans 364 residues: DNA polymerase IV (364 aa).

The UmuC domain maps to 7–187 (IIHVDMDAFY…LPVNRVPGVG (181 aa)). Residues D11 and D105 each coordinate Mg(2+). E106 is a catalytic residue.

Belongs to the DNA polymerase type-Y family. In terms of assembly, monomer. The cofactor is Mg(2+).

Its subcellular location is the cytoplasm. The catalysed reaction is DNA(n) + a 2'-deoxyribonucleoside 5'-triphosphate = DNA(n+1) + diphosphate. Functionally, poorly processive, error-prone DNA polymerase involved in untargeted mutagenesis. Copies undamaged DNA at stalled replication forks, which arise in vivo from mismatched or misaligned primer ends. These misaligned primers can be extended by PolIV. Exhibits no 3'-5' exonuclease (proofreading) activity. May be involved in translesional synthesis, in conjunction with the beta clamp from PolIII. The polypeptide is DNA polymerase IV (Stenotrophomonas maltophilia (strain K279a)).